We begin with the raw amino-acid sequence, 479 residues long: Catalase A (479 aa).

The active site involves His-63. A heme-binding site is contributed by Tyr-346.

The protein belongs to the catalase family. It depends on heme as a cofactor.

It localises to the peroxisome matrix. It carries out the reaction 2 H2O2 = O2 + 2 H2O. Functionally, catalyzes the degradation of hydrogen peroxide (H(2)O(2)) generated by peroxisomal oxidases to water and oxygen, thereby protecting cells from the toxic effects of hydrogen peroxide. The protein is Catalase A (catA) of Botryotinia fuckeliana (Noble rot fungus).